A 375-amino-acid polypeptide reads, in one-letter code: 2-isopropylmalate synthase (375 aa).

A Pyruvate carboxyltransferase domain is found at 1 to 124 (GRTSIDNLCR…FTNIKHNELY (124 aa)). Residues H59, H61, and N95 each contribute to the Mn(2+) site. The tract at residues 250-375 (QLKYFSIHSG…SKIKNIKNKK (126 aa)) is regulatory domain.

It belongs to the alpha-IPM synthase/homocitrate synthase family. LeuA type 1 subfamily. Homodimer.

The protein localises to the cytoplasm. The catalysed reaction is 3-methyl-2-oxobutanoate + acetyl-CoA + H2O = (2S)-2-isopropylmalate + CoA + H(+). Its pathway is amino-acid biosynthesis; L-leucine biosynthesis; L-leucine from 3-methyl-2-oxobutanoate: step 1/4. Its function is as follows. Catalyzes the condensation of the acetyl group of acetyl-CoA with 3-methyl-2-oxobutanoate (2-ketoisovalerate) to form 3-carboxy-3-hydroxy-4-methylpentanoate (2-isopropylmalate). The sequence is that of 2-isopropylmalate synthase from Buchnera aphidicola subsp. Thelaxes suberi.